Consider the following 728-residue polypeptide: Protein Hook homolog 1 (728 aa).

Position 1 is an N-acetylmethionine (Met-1). The tract at residues 1 to 555 (MEETQPPPQP…LKQKLEAHME (555 aa)) is sufficient for interaction with microtubules. One can recognise a Calponin-homology (CH) domain in the interval 12–128 (LPLCDSLMIW…RLLQLILGCA (117 aa)). Coiled-coil stretches lie at residues 169–434 (PNDA…RCSQ) and 477–658 (LRLQ…AKFR). Residues 169-444 (PNDAVGELEQ…VQQDHLNQTD (276 aa)) form a sufficient for homodimerization, interaction wit HOOK2, HOOK3 and AP4M1 region. A Phosphoserine modification is found at Ser-235. Residues 481-512 (QEGSENERIEELQEQLEQKHRKMNELETEQRL) form a disordered region. Over residues 503–512 (MNELETEQRL) the composition is skewed to basic and acidic residues. Residues 657-728 (FRDYEEKLIV…SVKVPATTSD (72 aa)) are sufficient for interaction with AKTIP and VPS18. Thr-699 carries the post-translational modification Phosphothreonine. 2 positions are modified to phosphoserine: Ser-719 and Ser-727.

This sequence belongs to the hook family. Self-associates. Component of the FTS/Hook/FHIP complex (FHF complex), composed of AKTIP/FTS, FHIP1B, and one or more members of the Hook family of proteins HOOK1, HOOK2, and HOOK3. Interacts directly with AKTIP/FTS, HOOK2 and HOOK3. Associates with several subunits of the homotypic vesicular sorting complex (the HOPS complex) including VPS16, VPS18, VPS39 and VPS41; these interactions may be indirect. Interacts with CCDC181. Interacts (via coiled-coil region) with RIMBP3 (via C-terminus). Interacts with LRGUK (via guanylate kinase-like domain). Interacts with microtubules. May interact with CLN3. Interacts with AP4M1; the interaction is direct, mediates the interaction between FTS-Hook-FHIP (FHF) complex and AP-4 and the perinuclear distribution of AP-4.

It localises to the cytoplasm. Its subcellular location is the cytoskeleton. Component of the FTS/Hook/FHIP complex (FHF complex). The FHF complex may function to promote vesicle trafficking and/or fusion via the homotypic vesicular protein sorting complex (the HOPS complex). FHF complex promotes the distribution of AP-4 complex to the perinuclear area of the cell. Required for spermatid differentiation. Probably involved in the positioning of the microtubules of the manchette and the flagellum in relation to the membrane skeleton. This chain is Protein Hook homolog 1, found in Homo sapiens (Human).